We begin with the raw amino-acid sequence, 537 residues long: Ribonuclease Y (537 aa).

The chain crosses the membrane as a helical span at residues 4-24; that stretch reads FPIIMSVFAAIIGLVIGYVSV. A disordered region spans residues 112–148; sequence ASTLDRKDDNLSNKEKALEQKEQSLSDKSKHIDAREE. Residues 227-287 form the KH domain; it reads TNSTVHLPDD…IRREIARMTM (61 aa). An HD domain is found at 353–446; it reads VLRHSIEVAK…VAAADALSAA (94 aa).

The protein belongs to the RNase Y family.

Its subcellular location is the cell membrane. Its function is as follows. Endoribonuclease that initiates mRNA decay. In Streptococcus sanguinis (strain SK36), this protein is Ribonuclease Y.